A 113-amino-acid polypeptide reads, in one-letter code: Ribosome-binding factor A (113 aa).

It belongs to the RbfA family. As to quaternary structure, monomer. Binds 30S ribosomal subunits, but not 50S ribosomal subunits or 70S ribosomes.

Its subcellular location is the cytoplasm. Functionally, one of several proteins that assist in the late maturation steps of the functional core of the 30S ribosomal subunit. Associates with free 30S ribosomal subunits (but not with 30S subunits that are part of 70S ribosomes or polysomes). Required for efficient processing of 16S rRNA. May interact with the 5'-terminal helix region of 16S rRNA. The sequence is that of Ribosome-binding factor A from Lactococcus lactis subsp. cremoris (Streptococcus cremoris).